Consider the following 387-residue polypeptide: Alkanesulfonate monooxygenase (387 aa).

The protein belongs to the SsuD family.

The catalysed reaction is an alkanesulfonate + FMNH2 + O2 = an aldehyde + FMN + sulfite + H2O + 2 H(+). In terms of biological role, catalyzes the desulfonation of aliphatic sulfonates. The polypeptide is Alkanesulfonate monooxygenase (Cupriavidus necator (strain ATCC 17699 / DSM 428 / KCTC 22496 / NCIMB 10442 / H16 / Stanier 337) (Ralstonia eutropha)).